The following is a 638-amino-acid chain: MASEIHMPGPVCLTENTKGHLVVNSEALEILSAITQPVVVVAIVGLYRTGKSYLMNKLAGKNKGFPLGCTVKSETKGIWMWCVPHPSKPNHTLILLDTEGLGDMEKSDPKSDSWIFALAVLLSSSFVYNSMGTINHQALEQLHYVTELTELIRAKSCPRPDEVEDSSEFVSFFPDFIWTVRDFTLELKLDGHPITEDEYLENALKLISGKNPQIQNSNKPREWIRHFFPKQKCFVFDRPINDKKLLLHVEEVREDQLDSNFQMQSENFCSYIFTHAKTKTLREGILVTGNRLGMLVETYLDAINSGATPCLENAMAVLAQCENSAAVQRAANHYSQQMAQQVRFPTDTLQELLDVHAVCEREAIAVFMEYSFKDKSQEFQKKLVDTMEKKKEDFVLQNEEASAKYCQAELKRLSELLTESISRGTFFVPGGHNIYLEAKKKIEQDYTLVPRKGVKADEVLQSFLQSQVVIEESILQSDKALTAGEKAIAAKQAKKEAAEKEQELLRQKQKEQQQMMEAQERSFQENIAQLKKKMERERENYMRELRKMLSHKMKVLEELLTEGFKEIFESLNEEINRLKEQIEAAENEEPSVFSQILDVAGSIFIAALPGAAKLVDLGMKILSSLCNRLRNPGKKIIS.

The segment at 1–310 (MASEIHMPGP…DAINSGATPC (310 aa)) is GTPase domain (Globular). One can recognise a GB1/RHD3-type G domain in the interval 35–277 (TQPVVVVAIV…FCSYIFTHAK (243 aa)). Residues 45–52 (GLYRTGKS), 67–69 (LGC), and 97–101 (DTEGL) each bind GTP. Positions 311–638 (LENAMAVLAQ…LRNPGKKIIS (328 aa)) are interaction with the CYBA-CYBB complex. The tract at residues 590–638 (PSVFSQILDVAGSIFIAALPGAAKLVDLGMKILSSLCNRLRNPGKKIIS) is C-terminal tail; required for its localization to cytoplasmic vesicle.

It belongs to the TRAFAC class dynamin-like GTPase superfamily. GB1/RHD3 GTPase family. GB1 subfamily. As to quaternary structure, monomer and dimer. Interacts with CYBA, CYBA-CYBB complex and ATG4B. Interacts (via GB1/RHD3-type G domain) with NCF2 and NCF2-NCF4 complex.

The protein resides in the cytoplasmic vesicle membrane. The catalysed reaction is GTP + H2O = GDP + phosphate + H(+). It catalyses the reaction GDP + H2O = GMP + phosphate + H(+). Functionally, interferon (IFN)-inducible GTPase that plays important roles in innate immunity against a diverse range of bacterial, viral and protozoan pathogens. Hydrolyzes GTP to GMP in two consecutive cleavage reactions and predominantly uses GTP and not GDP or GMP as the substrate. Following infection, recruited to the pathogen-containing vacuoles or vacuole-escaped bacteria and acts as a positive regulator of inflammasome assembly by promoting the release of inflammasome ligands from bacteria. Acts by promoting lysis of pathogen-containing vacuoles, releasing pathogens into the cytosol. Following pathogen release in the cytosol, promotes recruitment of proteins that mediate bacterial cytolysis: this liberates ligands that are detected by inflammasomes, such as lipopolysaccharide (LPS) that activates the non-canonical CASP4/CASP11 inflammasome or double-stranded DNA (dsDNA) that activates the AIM2 inflammasome. Also promotes IFN-gamma-mediated host defense against bacterial infections by regulating oxidative responses and bacteriolytic peptide generation. May help to assemble NADPH oxidase on phagosomal membranes by acting as a bridging protein between NADPH oxidase cytosolic subunits NCF2-NCF4 and the membrane subunits CYBA-CYBB. Participates along with GBP1 in trafficking monoubiquinated protein cargo to autolysosomes for generating ubiquitin-derived antimicrobial peptides. Facilitates influenza A virus replication by inhibiting the activation of NF-kappaB and JAK-STAT signaling pathways and the expression of type I, type III interferons and pro-inflammatory cytokines. Confers protection to several pathogens, including the bacterial pathogens Listeria monocytogenes and Mycobacterium bovis BCG as well as the protozoan pathogen Toxoplasma gondii. Required for disruption of the parasitophorous vacuole formed following T.gondii infection and subsequent killing of the parasite. The chain is Guanylate-binding protein 7 (GBP7) from Homo sapiens (Human).